Consider the following 747-residue polypeptide: Elongation factor G, mitochondrial (747 aa).

The transit peptide at 1 to 32 (MTLITRVLNSNLPLRLSALKTVRQLQCGYSSH) directs the protein to the mitochondrion. Residues 42–319 (ERIRNIGISA…AIIDYLPNPG (278 aa)) enclose the tr-type G domain. GTP is bound by residues 51 to 58 (AHIDSGKT), 118 to 122 (DTPGH), and 172 to 175 (NKLD).

The protein belongs to the TRAFAC class translation factor GTPase superfamily. Classic translation factor GTPase family. EF-G/EF-2 subfamily.

It is found in the mitochondrion. Its pathway is protein biosynthesis; polypeptide chain elongation. Functionally, mitochondrial GTPase that catalyzes the GTP-dependent ribosomal translocation step during translation elongation. During this step, the ribosome changes from the pre-translocational (PRE) to the post-translocational (POST) state as the newly formed A-site-bound peptidyl-tRNA and P-site-bound deacylated tRNA move to the P and E sites, respectively. Catalyzes the coordinated movement of the two tRNA molecules, the mRNA and conformational changes in the ribosome. Essential during development as it acts as a retrograde signal from mitochondria to the nucleus to slow down cell proliferation if mitochondrial energy output is low. The protein is Elongation factor G, mitochondrial of Drosophila virilis (Fruit fly).